The primary structure comprises 254 residues: ATP synthase subunit a (254 aa).

A propeptide spans 1 to 6 (MAFLIH) (removed in mature form). The next 7 helical transmembrane spans lie at 32 to 52 (LTNLGLYTILTVYLVLALHIM), 83 to 103 (IGAANEMYLPFIYSLFFFILI), 119 to 139 (SIMVSIGLSMTIFIGVTILGL), 146 to 166 (FFSFFVPSGTPLGLVPLLVPI), 182 to 202 (LFANVTAGHVLMKILAGFLAP), 207 to 227 (TFIISVLTVLPFIIFTGIIGL), and 228 to 248 (EIAVSFIQAYVFCVLTCSYLK).

It belongs to the ATPase A chain family. In terms of assembly, F-type ATPases have 2 components, CF(1) - the catalytic core - and CF(0) - the membrane proton channel. CF(1) has five subunits: alpha(3), beta(3), gamma(1), delta(1), epsilon(1). CF(0) has three main subunits: a, b and c.

It is found in the mitochondrion inner membrane. Mitochondrial membrane ATP synthase (F(1)F(0) ATP synthase or Complex V) produces ATP from ADP in the presence of a proton gradient across the membrane which is generated by electron transport complexes of the respiratory chain. F-type ATPases consist of two structural domains, F(1) - containing the extramembraneous catalytic core and F(0) - containing the membrane proton channel, linked together by a central stalk and a peripheral stalk. During catalysis, ATP synthesis in the catalytic domain of F(1) is coupled via a rotary mechanism of the central stalk subunits to proton translocation. Key component of the proton channel; it may play a direct role in the translocation of protons across the membrane. The protein is ATP synthase subunit a (ATP6) of Mycosarcoma maydis (Corn smut fungus).